Reading from the N-terminus, the 254-residue chain is DNA repair protein RecO (254 aa).

It belongs to the RecO family.

In terms of biological role, involved in DNA repair and RecF pathway recombination. This Anaeromyxobacter dehalogenans (strain 2CP-1 / ATCC BAA-258) protein is DNA repair protein RecO.